The following is a 318-amino-acid chain: NADH-ubiquinone oxidoreductase chain 1 (318 aa).

The next 8 membrane-spanning stretches (helical) occupy residues 2–22 (LLTN…FLTL), 69–89 (LMFI…WAPL), 102–122 (ILFI…SGWA), 147–167 (AIIL…TLTI), 172–192 (MWLI…TLAE), 231–251 (IILM…NPLF), 253–273 (ELHT…FLWI), and 294–314 (LPLT…LAGI).

Belongs to the complex I subunit 1 family.

The protein localises to the mitochondrion inner membrane. The catalysed reaction is a ubiquinone + NADH + 5 H(+)(in) = a ubiquinol + NAD(+) + 4 H(+)(out). In terms of biological role, core subunit of the mitochondrial membrane respiratory chain NADH dehydrogenase (Complex I) that is believed to belong to the minimal assembly required for catalysis. Complex I functions in the transfer of electrons from NADH to the respiratory chain. The immediate electron acceptor for the enzyme is believed to be ubiquinone. This is NADH-ubiquinone oxidoreductase chain 1 (MT-ND1) from Bradypus variegatus (Brown-throated three-fingered sloth).